Reading from the N-terminus, the 946-residue chain is Histone-lysine N-methyltransferase, H3 lysine-79 specific (946 aa).

Residues 1 to 18 (MSEADAGARDESPSRTAE) are compositionally biased toward basic and acidic residues. The tract at residues 1–28 (MSEADAGARDESPSRTAEEPAAAMRIKE) is disordered. The DOT1 domain occupies 54-369 (QGKTLRLPGN…KLIKYYEDQR (316 aa)). Residues 173–176 (YGET), 196–205 (FVDLGSGIGQ), Glu223, and 259–260 (DF) contribute to the S-adenosyl-L-methionine site. Basic and acidic residues predominate over residues 368-409 (QRRRQEVKSSREGSEISDGRDMGLKKRKSQRESSVHPDKLQK). Disordered regions lie at residues 368–577 (QRRR…HGGG) and 849–905 (PTAS…GATE). Residues 410 to 422 (TEQAAASSHQSPK) show a composition bias toward polar residues. Over residues 464-484 (GKDREKEKEKKKNKIYEEKKV) the composition is skewed to basic and acidic residues. Low complexity-rich tracts occupy residues 491-502 (KSSSSRYSSETP), 512-528 (NSIS…QPKA), and 855-864 (SKVSPSSSSS). Residues 880 to 903 (GAGGGGKRGTSGGRKSDGGGGGGA) show a composition bias toward gly residues.

This sequence belongs to the class I-like SAM-binding methyltransferase superfamily. DOT1 family. Interacts with zfp-1 (via C-terminus) to form a heterodimer known as the zfp-1-dot-1.1 complex or DotCom complex.

The protein resides in the nucleus. It localises to the chromosome. The enzyme catalyses L-lysyl(79)-[histone H3] + 3 S-adenosyl-L-methionine = N(6),N(6),N(6)-trimethyl-L-lysyl(79)-[histone H3] + 3 S-adenosyl-L-homocysteine + 3 H(+). In terms of biological role, histone methyltransferase, which in complex with zfp-1, methylates 'Lys-79' of histone H3 to activate transcription. During stress, the zfp-1-dot-1.1 complex also plays a role in the deubiquitination of histone H2B sites, which negatively modulates the RNA polymerase II-induced transcription of highly expressed genes. Involved in controlling tissue-specific gene expression, particularly in the epidermis. The chain is Histone-lysine N-methyltransferase, H3 lysine-79 specific from Caenorhabditis elegans.